The sequence spans 903 residues: Disintegrin and metalloproteinase domain-containing protein 12 (903 aa).

The N-terminal stretch at 1–31 is a signal peptide; that stretch reads MAERPARRAPPARALLLALAGALLAPRAARG. The propeptide occupies 32-205; sequence MSLWDQRGTY…SQMRARRHKR (174 aa). N-linked (GlcNAc...) asparagine glycosylation is found at Asn112, Asn147, and Asn157. The Cysteine switch motif lies at 175–182; that stretch reads GLCGSQHN. Cys177 is a binding site for Zn(2+). 2 N-linked (GlcNAc...) asparagine glycosylation sites follow: Asn182 and Asn185. Over 206–706 the chain is Extracellular; it reads ETLKMTKYVE…GPIRQADNQG (501 aa). The region spanning 212 to 414 is the Peptidase M12B domain; the sequence is KYVELVIVAD…GMGMCLFNLP (203 aa). 3 disulfides stabilise this stretch: Cys323-Cys409, Cys365-Cys393, and Cys367-Cys376. A Zn(2+)-binding site is contributed by His348. The active site involves Glu349. The Zn(2+) site is built by His352 and His358. One can recognise a Disintegrin domain in the interval 422-508; the sequence is GRKCGNGYVE…HCPANVYLHD (87 aa). Asn450 is a glycosylation site (N-linked (GlcNAc...) asparagine). Cys480 and Cys500 are disulfide-bonded. Asn649 carries an N-linked (GlcNAc...) asparagine glycan. An EGF-like domain is found at 654-686; sequence GVHKCAMQCHGRGVCNNRKNCHCEAHWAPPFCD. Intrachain disulfides connect Cys658–Cys668, Cys662–Cys674, and Cys676–Cys685. The chain crosses the membrane as a helical span at residues 707–727; it reads LTVGILVSILCLLAAGFVVYL. At 728-903 the chain is on the cytoplasmic side; that stretch reads KRKTLMRLLF…PRPSHNAYIK (176 aa). Disordered regions lie at residues 753–790 and 819–903; these read SRTP…HSLK and HQTP…AYIK. 2 consecutive short sequence motifs (SH3-binding; class II) follow at residues 824–830 and 846–852; these read APSGPAR and KPSPPQK. 3 consecutive short sequence motifs (SH3-binding; class I) follow at residues 830-837, 852-858, and 881-887; these read RPLPASPA, KPLPADP, and RPAPIRP. The segment covering 847–856 has biased composition (pro residues); that stretch reads PSPPQKPLPA. At Tyr901 the chain carries Phosphotyrosine; by SRC.

Interacts with alpha-actinin-2 and with syndecans. Interacts with SH3PXD2A. Interacts with FST3. Interacts with RACK1; the interaction is required for PKC-dependent translocation of ADAM12 to the cell membrane. It depends on Zn(2+) as a cofactor. Post-translationally, the precursor is cleaved by a furin endopeptidase. In terms of tissue distribution, expressed during early developing mesenchymal cells that give rise to skeletal muscle, bones and visceral organs. Not expressed in adult normal muscle but expressed in regenerating muscle.

It is found in the membrane. In terms of biological role, involved in skeletal muscle regeneration, specifically at the onset of cell fusion. Also involved in macrophage-derived giant cells (MGC) and osteoclast formation from mononuclear precursors. The chain is Disintegrin and metalloproteinase domain-containing protein 12 (Adam12) from Mus musculus (Mouse).